A 191-amino-acid polypeptide reads, in one-letter code: MARRKAAPKRETLPDPLFHSELLAKFINAVMRNGKKSVAEKIVYGALDVVAKRVQNKSGEQGDGDGEGGGKAGGIKKRSLGDIRTDENARALALETFKGALDKVMPNVEVKSRRVGGSTYQVPVEIRMARRQALARRWLVEYANKRNEKTMVLRLAHEILDAVEGRGGAIKKREDVHRMAKANQAFAHYRW.

Residues 56-80 (NKSGEQGDGDGEGGGKAGGIKKRSL) are disordered.

The protein belongs to the universal ribosomal protein uS7 family. In terms of assembly, part of the 30S ribosomal subunit. Contacts proteins S9 and S11.

Its function is as follows. One of the primary rRNA binding proteins, it binds directly to 16S rRNA where it nucleates assembly of the head domain of the 30S subunit. Is located at the subunit interface close to the decoding center, probably blocks exit of the E-site tRNA. This chain is Small ribosomal subunit protein uS7, found in Coxiella burnetii (strain CbuG_Q212) (Coxiella burnetii (strain Q212)).